Consider the following 255-residue polypeptide: Indole-3-glycerol phosphate synthase (255 aa).

Belongs to the TrpC family.

The enzyme catalyses 1-(2-carboxyphenylamino)-1-deoxy-D-ribulose 5-phosphate + H(+) = (1S,2R)-1-C-(indol-3-yl)glycerol 3-phosphate + CO2 + H2O. It participates in amino-acid biosynthesis; L-tryptophan biosynthesis; L-tryptophan from chorismate: step 4/5. This chain is Indole-3-glycerol phosphate synthase (trpC), found in Priestia megaterium (strain ATCC 12872 / QMB1551) (Bacillus megaterium).